Consider the following 178-residue polypeptide: MTEAQEPEYGGPSVPQTRTARHRRIVDILNRQPVRSQSQLAKLLADDGLSVTQATLSRDLDELGAVKIRNTGGELIYAVPSEGGFRTPQAPLGGSAKEERMRRLSAELLISAEASANLVVLRTPPGAAQFLASAIDQAELHDILGTIAGDDTLMLISRDPSGGQALADHLLRLAQNDR.

The interval 1–20 is disordered; it reads MTEAQEPEYGGPSVPQTRTA.

Belongs to the ArgR family.

The protein localises to the cytoplasm. Its pathway is amino-acid biosynthesis; L-arginine biosynthesis [regulation]. Functionally, regulates arginine biosynthesis genes. This Streptomyces griseus subsp. griseus (strain JCM 4626 / CBS 651.72 / NBRC 13350 / KCC S-0626 / ISP 5235) protein is Arginine repressor.